A 557-amino-acid polypeptide reads, in one-letter code: Glucose-6-phosphate isomerase (557 aa).

Glu-361 acts as the Proton donor in catalysis. Catalysis depends on residues His-392 and Lys-520.

Belongs to the GPI family.

The protein localises to the cytoplasm. The enzyme catalyses alpha-D-glucose 6-phosphate = beta-D-fructose 6-phosphate. It participates in carbohydrate biosynthesis; gluconeogenesis. It functions in the pathway carbohydrate degradation; glycolysis; D-glyceraldehyde 3-phosphate and glycerone phosphate from D-glucose: step 2/4. Functionally, catalyzes the reversible isomerization of glucose-6-phosphate to fructose-6-phosphate. This is Glucose-6-phosphate isomerase from Acinetobacter baylyi (strain ATCC 33305 / BD413 / ADP1).